Reading from the N-terminus, the 161-residue chain is Small ribosomal subunit protein uS9 (161 aa).

This sequence belongs to the universal ribosomal protein uS9 family.

The sequence is that of Small ribosomal subunit protein uS9 from Rickettsia felis (strain ATCC VR-1525 / URRWXCal2) (Rickettsia azadi).